Consider the following 273-residue polypeptide: Imidazole glycerol phosphate synthase subunit HisF (273 aa).

Residues D11 and D134 contribute to the active site.

Belongs to the HisA/HisF family. As to quaternary structure, heterodimer of HisH and HisF.

It is found in the cytoplasm. It carries out the reaction 5-[(5-phospho-1-deoxy-D-ribulos-1-ylimino)methylamino]-1-(5-phospho-beta-D-ribosyl)imidazole-4-carboxamide + L-glutamine = D-erythro-1-(imidazol-4-yl)glycerol 3-phosphate + 5-amino-1-(5-phospho-beta-D-ribosyl)imidazole-4-carboxamide + L-glutamate + H(+). Its pathway is amino-acid biosynthesis; L-histidine biosynthesis; L-histidine from 5-phospho-alpha-D-ribose 1-diphosphate: step 5/9. In terms of biological role, IGPS catalyzes the conversion of PRFAR and glutamine to IGP, AICAR and glutamate. The HisF subunit catalyzes the cyclization activity that produces IGP and AICAR from PRFAR using the ammonia provided by the HisH subunit. The protein is Imidazole glycerol phosphate synthase subunit HisF of Methanosarcina acetivorans (strain ATCC 35395 / DSM 2834 / JCM 12185 / C2A).